Here is a 134-residue protein sequence, read N- to C-terminus: Profilin-4 (134 aa).

Cys-13 and Cys-118 are disulfide-bonded. An Involved in PIP2 interaction motif is present at residues 84–100; that stretch reads AVIRGKKGSGGITIKKT. A Phosphothreonine modification is found at Thr-114.

Belongs to the profilin family. In terms of assembly, occurs in many kinds of cells as a complex with monomeric actin in a 1:1 ratio. In terms of processing, phosphorylated by MAP kinases.

Its subcellular location is the cytoplasm. The protein resides in the cytoskeleton. Its function is as follows. Binds to actin and affects the structure of the cytoskeleton. At high concentrations, profilin prevents the polymerization of actin, whereas it enhances it at low concentrations. This is Profilin-4 from Olea europaea (Common olive).